The chain runs to 489 residues: ATP synthase subunit beta, chloroplastic (489 aa).

170 to 177 (GGAGVGKT) is a binding site for ATP.

It belongs to the ATPase alpha/beta chains family. In terms of assembly, F-type ATPases have 2 components, CF(1) - the catalytic core - and CF(0) - the membrane proton channel. CF(1) has five subunits: alpha(3), beta(3), gamma(1), delta(1), epsilon(1). CF(0) has four main subunits: a(1), b(1), b'(1) and c(9-12).

The protein localises to the plastid. It localises to the chloroplast thylakoid membrane. It catalyses the reaction ATP + H2O + 4 H(+)(in) = ADP + phosphate + 5 H(+)(out). In terms of biological role, produces ATP from ADP in the presence of a proton gradient across the membrane. The catalytic sites are hosted primarily by the beta subunits. In Zygnema circumcarinatum (Green alga), this protein is ATP synthase subunit beta, chloroplastic.